A 428-amino-acid polypeptide reads, in one-letter code: Enolase (428 aa).

Position 167 (Q167) interacts with (2R)-2-phosphoglycerate. E209 serves as the catalytic Proton donor. Positions 246, 288, and 315 each coordinate Mg(2+). Positions 340, 369, 370, and 391 each coordinate (2R)-2-phosphoglycerate. The active-site Proton acceptor is K340.

Belongs to the enolase family. Component of the RNA degradosome, a multiprotein complex involved in RNA processing and mRNA degradation. Requires Mg(2+) as cofactor.

The protein resides in the cytoplasm. It localises to the secreted. It is found in the cell surface. The enzyme catalyses (2R)-2-phosphoglycerate = phosphoenolpyruvate + H2O. It participates in carbohydrate degradation; glycolysis; pyruvate from D-glyceraldehyde 3-phosphate: step 4/5. Catalyzes the reversible conversion of 2-phosphoglycerate (2-PG) into phosphoenolpyruvate (PEP). It is essential for the degradation of carbohydrates via glycolysis. The protein is Enolase of Pseudomonas savastanoi pv. phaseolicola (strain 1448A / Race 6) (Pseudomonas syringae pv. phaseolicola (strain 1448A / Race 6)).